Reading from the N-terminus, the 907-residue chain is Protein translocase subunit SecA (907 aa).

ATP contacts are provided by residues Q87, 105–109 (GEGKT), and D512. The tract at residues 834 to 907 (QSDVDDMEQR…KYKQCHGKLS (74 aa)) is disordered. The span at 840 to 856 (MEQRRREEEAKIQRDYQ) shows a compositional bias: basic and acidic residues. The span at 865–876 (DESQASSDNTPK) shows a compositional bias: polar residues. The segment covering 878–887 (MIREGDKVGR) has biased composition (basic and acidic residues). Zn(2+)-binding residues include C891, C893, C902, and H903. The span at 897–907 (KKYKQCHGKLS) shows a compositional bias: basic residues.

It belongs to the SecA family. In terms of assembly, monomer and homodimer. Part of the essential Sec protein translocation apparatus which comprises SecA, SecYEG and auxiliary proteins SecDF-YajC and YidC. Requires Zn(2+) as cofactor.

The protein resides in the cell inner membrane. It localises to the cytoplasm. It catalyses the reaction ATP + H2O + cellular proteinSide 1 = ADP + phosphate + cellular proteinSide 2.. In terms of biological role, part of the Sec protein translocase complex. Interacts with the SecYEG preprotein conducting channel. Has a central role in coupling the hydrolysis of ATP to the transfer of proteins into and across the cell membrane, serving both as a receptor for the preprotein-SecB complex and as an ATP-driven molecular motor driving the stepwise translocation of polypeptide chains across the membrane. The protein is Protein translocase subunit SecA of Shewanella denitrificans (strain OS217 / ATCC BAA-1090 / DSM 15013).